A 556-amino-acid chain; its full sequence is Formate--tetrahydrofolate ligase (556 aa).

Position 65-72 (65-72) interacts with ATP; it reads TPAGEGKS.

Belongs to the formate--tetrahydrofolate ligase family.

It carries out the reaction (6S)-5,6,7,8-tetrahydrofolate + formate + ATP = (6R)-10-formyltetrahydrofolate + ADP + phosphate. It functions in the pathway one-carbon metabolism; tetrahydrofolate interconversion. The polypeptide is Formate--tetrahydrofolate ligase (Streptococcus pneumoniae (strain JJA)).